The primary structure comprises 70 residues: Probable U6 snRNA-associated Sm-like protein (70 aa).

The Sm domain occupies 3 to 70; that stretch reads DPFCFLKMYL…ILFVGPRLLL (68 aa).

This sequence belongs to the snRNP Sm proteins family.

It is found in the nucleus. Binds specifically to the 3'-terminal U-tract of U6 snRNA. The polypeptide is Probable U6 snRNA-associated Sm-like protein (Encephalitozoon cuniculi (strain GB-M1) (Microsporidian parasite)).